Consider the following 282-residue polypeptide: Acetylglutamate kinase (282 aa).

Substrate-binding positions include 62-63 (GG), arginine 84, and asparagine 178.

It belongs to the acetylglutamate kinase family. ArgB subfamily.

The protein localises to the cytoplasm. The catalysed reaction is N-acetyl-L-glutamate + ATP = N-acetyl-L-glutamyl 5-phosphate + ADP. The protein operates within amino-acid biosynthesis; L-arginine biosynthesis; N(2)-acetyl-L-ornithine from L-glutamate: step 2/4. Functionally, catalyzes the ATP-dependent phosphorylation of N-acetyl-L-glutamate. The sequence is that of Acetylglutamate kinase from Thermotoga neapolitana (strain ATCC 49049 / DSM 4359 / NBRC 107923 / NS-E).